We begin with the raw amino-acid sequence, 585 residues long: S-antigen protein (585 aa).

A signal peptide spans 1–23 (MNRILSVTLCLFFIYLYIYKTYG). Residues 51 to 585 (NGKGQKYEDL…NSIINMLIGM (535 aa)) form a disordered region. A compositionally biased stretch (acidic residues) spans 59 to 85 (DLEEEKEGENDDEEDSNSEESNNDEEN). The segment covering 96–113 (QETHGSEDEVSNGREDKV) has biased composition (basic and acidic residues). A run of 56 repeats spans residues 102–109 (EDEVSNGR), 110–117 (EDKVSNGG), 118–125 (EDEVSNGG), 126–133 (EDEVSNGR), 134–141 (EDKVSNGG), 142–149 (EDEVSNGR), 150–157 (EDKVSNGG), 158–165 (EDEVSNGR), 166–173 (EDKVSNGG), 174–181 (EDEVSNGR), 182–189 (EDKVSNGG), 190–197 (EDEVSNGR), 198–205 (EDKVSNGR), 206–213 (EDKVSNGG), 214–221 (EDEVSNGR), 222–229 (EDKVSNGR), 230–237 (EDKVSNGG), 238–245 (EDEVSNGR), 246–253 (EDKVSNGG), 254–261 (EDEVSNGR), 262–269 (EDKVSNGG), 270–277 (EDEVSNGR), 278–285 (EDKVSNGR), 286–293 (EDEVSNGR), 294–301 (EDKVSNGG), 302–309 (EDEVSNGR), 310–317 (EDKVSNGG), 318–325 (EDEVSNGR), 326–333 (EDKVSNGR), 334–341 (EDKVSNGG), 342–349 (EDEVSNGR), 350–357 (EDKVSNGG), 358–365 (EDEVSNGR), 366–373 (EDKVSNGR), 374–381 (EDKVSNGR), 382–389 (EDEVSNGR), 390–397 (EDKVSNGG), 398–405 (EDEVSNGR), 406–413 (EDKVSNGR), 414–421 (EDKVSNGG), 422–429 (EDEVSNGR), 430–437 (EDKVSNGG), 438–445 (EDEVSNGR), 446–453 (EDKVSNGR), 454–461 (EDKVSNGR), 462–469 (EDKVSNGG), 470–477 (EDEVSNGG), 478–485 (EDEVSNGR), 486–493 (EDKVSNGG), 494–501 (EDEVSNGR), 502–509 (EDKVSNGG), 510–517 (EDEVSNGR), 518–525 (EDKVSNGG), 526–533 (EDEVSNGR), 534–541 (EDKVSNGR), and 542–549 (EDEVSNGR). The 56 X 8 AA tandem repeats of E-D-[EK]-V-S-N-G-[RG] stretch occupies residues 102 to 549 (EDEVSNGRED…GREDEVSNGR (448 aa)). Acidic residues predominate over residues 117-129 (GEDEVSNGGEDEV). 2 stretches are compositionally biased toward basic and acidic residues: residues 194-209 (SNGR…EDKV) and 218-233 (SNGR…EDKV). Residues 274 to 297 (SNGREDKVSNGREDEVSNGREDKV) show a composition bias toward basic and acidic residues. Positions 322–337 (SNGREDKVSNGREDKV) are enriched in basic and acidic residues. Basic and acidic residues-rich tracts occupy residues 362-393 (SNGR…EDKV) and 402-417 (SNGR…EDKV). Residues 442-465 (SNGREDKVSNGREDKVSNGREDKV) show a composition bias toward basic and acidic residues. The segment covering 469 to 481 (GEDEVSNGGEDEV) has biased composition (acidic residues). 2 stretches are compositionally biased toward basic and acidic residues: residues 530–553 (SNGR…EDKG) and 560–569 (ELSHNSESHT). Positions 576–585 (NSIINMLIGM) are enriched in low complexity.

The protein resides in the parasitophorous vacuole. Functionally, s antigens are soluble heat-stable proteins present in the sera of some infected individuals. The polypeptide is S-antigen protein (Plasmodium falciparum (isolate 3D7)).